The following is a 70-amino-acid chain: Brevinin-1Vb (70 aa).

An N-terminal signal peptide occupies residues 1–22 (MFTLKKSLLLLFFLGTINLSLC). Positions 23–44 (EEERNAEEERRDEPDEMNVEVE) are excised as a propeptide. Cys64 and Cys70 are disulfide-bonded.

In terms of tissue distribution, expressed by the skin glands.

It localises to the secreted. Its function is as follows. Antimicrobial peptide. The chain is Brevinin-1Vb from Odorrana versabilis (Chinese bamboo leaf odorous frog).